A 339-amino-acid chain; its full sequence is Nicotinate-nucleotide--dimethylbenzimidazole phosphoribosyltransferase (339 aa).

Glutamate 306 functions as the Proton acceptor in the catalytic mechanism.

It belongs to the CobT family.

The catalysed reaction is 5,6-dimethylbenzimidazole + nicotinate beta-D-ribonucleotide = alpha-ribazole 5'-phosphate + nicotinate + H(+). It participates in nucleoside biosynthesis; alpha-ribazole biosynthesis; alpha-ribazole from 5,6-dimethylbenzimidazole: step 1/2. Its function is as follows. Catalyzes the synthesis of alpha-ribazole-5'-phosphate from nicotinate mononucleotide (NAMN) and 5,6-dimethylbenzimidazole (DMB). This is Nicotinate-nucleotide--dimethylbenzimidazole phosphoribosyltransferase from Brucella canis (strain ATCC 23365 / NCTC 10854 / RM-666).